We begin with the raw amino-acid sequence, 622 residues long: Probable potassium transport system protein Kup (622 aa).

Transmembrane regions (helical) follow at residues 7–27 (LAIG…LYAF), 44–64 (VLGV…IQYV), 95–115 (GWLV…DSMI), 133–153 (PELQ…LFVL), 165–185 (FAPV…ISIV), 199–219 (AVLF…SVVL), 243–263 (WFGF…AMIV), 290–310 (LVIL…SGAF), 338–358 (IYIP…VLTF), 370–390 (IAVT…LVGV), 395–415 (WYYA…YFAA), and 422–442 (DGGW…TTWA).

Belongs to the HAK/KUP transporter (TC 2.A.72) family.

The protein localises to the cell inner membrane. It carries out the reaction K(+)(in) + H(+)(in) = K(+)(out) + H(+)(out). In terms of biological role, transport of potassium into the cell. Likely operates as a K(+):H(+) symporter. The protein is Probable potassium transport system protein Kup of Erythrobacter litoralis (strain HTCC2594).